The sequence spans 201 residues: NADH-quinone oxidoreductase subunit C (201 aa).

This sequence belongs to the complex I 30 kDa subunit family. As to quaternary structure, NDH-1 is composed of 14 different subunits. Subunits NuoB, C, D, E, F, and G constitute the peripheral sector of the complex.

It is found in the cell inner membrane. The enzyme catalyses a quinone + NADH + 5 H(+)(in) = a quinol + NAD(+) + 4 H(+)(out). Its function is as follows. NDH-1 shuttles electrons from NADH, via FMN and iron-sulfur (Fe-S) centers, to quinones in the respiratory chain. The immediate electron acceptor for the enzyme in this species is believed to be ubiquinone. Couples the redox reaction to proton translocation (for every two electrons transferred, four hydrogen ions are translocated across the cytoplasmic membrane), and thus conserves the redox energy in a proton gradient. In Aromatoleum aromaticum (strain DSM 19018 / LMG 30748 / EbN1) (Azoarcus sp. (strain EbN1)), this protein is NADH-quinone oxidoreductase subunit C.